Reading from the N-terminus, the 213-residue chain is ATP-dependent dethiobiotin synthetase BioD (213 aa).

Position 12-17 (12-17 (EVGKTY)) interacts with ATP. Threonine 16 serves as a coordination point for Mg(2+). Lysine 37 is a catalytic residue. ATP contacts are provided by residues aspartate 46, 107–110 (EGVG), and 167–168 (NN). Residues aspartate 46 and glutamate 107 each coordinate Mg(2+).

It belongs to the dethiobiotin synthetase family. As to quaternary structure, homodimer. It depends on Mg(2+) as a cofactor.

The protein resides in the cytoplasm. It carries out the reaction (7R,8S)-7,8-diammoniononanoate + CO2 + ATP = (4R,5S)-dethiobiotin + ADP + phosphate + 3 H(+). The protein operates within cofactor biosynthesis; biotin biosynthesis; biotin from 7,8-diaminononanoate: step 1/2. Its function is as follows. Catalyzes a mechanistically unusual reaction, the ATP-dependent insertion of CO2 between the N7 and N8 nitrogen atoms of 7,8-diaminopelargonic acid (DAPA, also called 7,8-diammoniononanoate) to form a ureido ring. The protein is ATP-dependent dethiobiotin synthetase BioD of Akkermansia muciniphila (strain ATCC BAA-835 / DSM 22959 / JCM 33894 / BCRC 81048 / CCUG 64013 / CIP 107961 / Muc).